A 311-amino-acid chain; its full sequence is 4-hydroxy-tetrahydrodipicolinate synthase (311 aa).

T51 provides a ligand contact to pyruvate. Residue Y140 is the Proton donor/acceptor of the active site. The Schiff-base intermediate with substrate role is filled by K168. I209 is a binding site for pyruvate.

Belongs to the DapA family. In terms of assembly, homotetramer; dimer of dimers.

It localises to the cytoplasm. The catalysed reaction is L-aspartate 4-semialdehyde + pyruvate = (2S,4S)-4-hydroxy-2,3,4,5-tetrahydrodipicolinate + H2O + H(+). The protein operates within amino-acid biosynthesis; L-lysine biosynthesis via DAP pathway; (S)-tetrahydrodipicolinate from L-aspartate: step 3/4. Catalyzes the condensation of (S)-aspartate-beta-semialdehyde [(S)-ASA] and pyruvate to 4-hydroxy-tetrahydrodipicolinate (HTPA). This chain is 4-hydroxy-tetrahydrodipicolinate synthase, found in Streptococcus gordonii (strain Challis / ATCC 35105 / BCRC 15272 / CH1 / DL1 / V288).